Reading from the N-terminus, the 172-residue chain is Capsid protein (172 aa).

The protein belongs to the nanoviridae capsid protein family.

The protein resides in the virion. This Astragalus sinicus (Chinese milk vetch) protein is Capsid protein (DNA-S).